The chain runs to 582 residues: Glutamine--tRNA ligase (582 aa).

The 'HIGH' region motif lies at 50–60; it reads PEPNGYLHIGH. ATP-binding positions include 51–53 and 57–63; these read EPN and HIGHAKS. Residues D83 and Y235 each coordinate L-glutamine. Residues T254 and 289–290 each bind ATP; that span reads RL. The 'KMSKS' region signature appears at 296–300; that stretch reads ITSKR.

This sequence belongs to the class-I aminoacyl-tRNA synthetase family. In terms of assembly, monomer.

The protein localises to the cytoplasm. The catalysed reaction is tRNA(Gln) + L-glutamine + ATP = L-glutaminyl-tRNA(Gln) + AMP + diphosphate. The sequence is that of Glutamine--tRNA ligase from Cupriavidus metallidurans (strain ATCC 43123 / DSM 2839 / NBRC 102507 / CH34) (Ralstonia metallidurans).